Reading from the N-terminus, the 396-residue chain is Ribosomal RNA large subunit methyltransferase I (396 aa).

The region spanning 2 to 81 is the PUA domain; sequence SVRLVLAKGR…ESIDIAFFTR (80 aa).

This sequence belongs to the methyltransferase superfamily. RlmI family.

The protein localises to the cytoplasm. The enzyme catalyses cytidine(1962) in 23S rRNA + S-adenosyl-L-methionine = 5-methylcytidine(1962) in 23S rRNA + S-adenosyl-L-homocysteine + H(+). Its function is as follows. Specifically methylates the cytosine at position 1962 (m5C1962) of 23S rRNA. The protein is Ribosomal RNA large subunit methyltransferase I of Escherichia coli O1:K1 / APEC.